A 224-amino-acid chain; its full sequence is MDSNWINCPSVFSSSSSSSRRCQSRSDLYLGGGYEDLEGEDDLKAEFICPFCAEDFDIVGLCCHIDEEHPVEAKNGVCPVCTKRVGLDIVGHITTQHANFFKVQRRRRLRRGGYSSTYLALKKELREANLQSLLGGSSSFTSSTNIDSDPLLSSFMFNSPSVNQSANKSATPVTVGNAATKVSIKESLKRDIQEAPLSGEDQEKAKKSEFVRGLLLSTMLEDDF.

Over residues methionine 1–phenylalanine 12 the composition is skewed to polar residues. The disordered stretch occupies residues methionine 1–glutamine 23. Over residues serine 13–glutamine 23 the composition is skewed to low complexity. Phosphothreonine is present on threonine 117.

Belongs to the Di19 family. Post-translationally, phosphorylated in vitro by CPK3 or CPK11. Expressed in seedlings, roots, leaves, stems, flowers and siliques.

It is found in the cytoplasm. Its subcellular location is the perinuclear region. This Arabidopsis thaliana (Mouse-ear cress) protein is Protein DEHYDRATION-INDUCED 19 homolog 4 (DI19-4).